The sequence spans 358 residues: Diels-Alderase phmD (358 aa).

The protein belongs to the Diels-Alderase family.

Its pathway is mycotoxin biosynthesis. In terms of biological role, diels-Alderase; part of the gene cluster that mediates the biosynthesis of the mycotoxins phomacins, leucine-derived cytochalasans with potent actin polymerization-inhibitory activities and monocot-specific antigerminative activities. The first step in the pathway is catalyzed by the hybrid PKS-NRPS phmA, assisted by the enoyl reductase phmE, that are responsible for fusion of the leucine precursor and the polyketide backbone to produce a 2-pyrrolidone intermediate. The polyketide synthase module (PKS) of phmA is responsible for the synthesis of the polyketide backbone and the downstream nonribosomal peptide synthetase (NRPS) amidates the carboxyl end of the polyketide with the leucine precursor. Because phmA lacks a designated enoylreductase (ER) domain, the required activity is provided the enoyl reductase phmE. Reduction by the hydrolyase phmG, followed by dehydration and intra-molecular Diels-Alder cyclization by the Diels-Alderase phmD then yield the required isoindolone-fused macrocycle. A number of oxidative steps catalyzed by the tailoring cytochrome P450 monooxygenase phmB, the FAD-linked oxidoreductase phmC and the short-chain dehydrogenase/reductase phmF, are further required to afford the final products, phomacin D and phomacin E. The polypeptide is Diels-Alderase phmD (Phaeosphaeria nodorum (strain SN15 / ATCC MYA-4574 / FGSC 10173) (Glume blotch fungus)).